Consider the following 278-residue polypeptide: HTH-type transcriptional activator RhaS (278 aa).

The HTH araC/xylS-type domain occupies 174–272 (NLLLAWLEDH…NWSPRDIRQG (99 aa)). 2 consecutive DNA-binding regions (H-T-H motif) follow at residues 191-212 (DAVAEQFSLSLRTLHRQLKQQT) and 239-262 (VTDIAYRCGFSDSNHFSTLFRREF).

In terms of assembly, binds DNA as a dimer.

It is found in the cytoplasm. Its function is as follows. Activates expression of the rhaBAD and rhaT operons. This Escherichia coli (strain SE11) protein is HTH-type transcriptional activator RhaS.